The chain runs to 337 residues: Protein-methionine-sulfoxide reductase catalytic subunit MsrP (337 aa).

Residues 1-50 (MLIKLPSASGSKESDVTPESIYLSRRTLLASSLAGLAVTALPRWASAADA) constitute a signal peptide (tat-type signal). Mo-molybdopterin-binding positions include Asn-94, 97 to 98 (YE), Cys-152, Thr-187, Asn-237, Arg-242, and 253 to 255 (SVK).

Belongs to the MsrP family. In terms of assembly, heterodimer of a catalytic subunit (MsrP) and a heme-binding subunit (MsrQ). Mo-molybdopterin serves as cofactor. Predicted to be exported by the Tat system. The position of the signal peptide cleavage has not been experimentally proven.

It localises to the periplasm. The enzyme catalyses L-methionyl-[protein] + a quinone + H2O = L-methionyl-(S)-S-oxide-[protein] + a quinol. The catalysed reaction is L-methionyl-[protein] + a quinone + H2O = L-methionyl-(R)-S-oxide-[protein] + a quinol. Its function is as follows. Part of the MsrPQ system that repairs oxidized periplasmic proteins containing methionine sulfoxide residues (Met-O), using respiratory chain electrons. Thus protects these proteins from oxidative-stress damage caused by reactive species of oxygen and chlorine generated by the host defense mechanisms. MsrPQ is essential for the maintenance of envelope integrity under bleach stress, rescuing a wide series of structurally unrelated periplasmic proteins from methionine oxidation. The catalytic subunit MsrP is non-stereospecific, being able to reduce both (R-) and (S-) diastereoisomers of methionine sulfoxide. In Pseudomonas syringae pv. tomato (strain ATCC BAA-871 / DC3000), this protein is Protein-methionine-sulfoxide reductase catalytic subunit MsrP.